Here is a 50-residue protein sequence, read N- to C-terminus: Large ribosomal subunit protein bL33B (50 aa).

This sequence belongs to the bacterial ribosomal protein bL33 family.

The chain is Large ribosomal subunit protein bL33B from Mycoplasmopsis agalactiae (strain NCTC 10123 / CIP 59.7 / PG2) (Mycoplasma agalactiae).